Here is an 866-residue protein sequence, read N- to C-terminus: Probable LRR receptor-like serine/threonine-protein kinase At5g16900 (866 aa).

The first 20 residues, 1 to 20 (MEDRHRYLFFIFAIIHYVQA), serve as a signal peptide directing secretion. Residues 21-515 (QQGFISLDCG…SSSGNKETTV (495 aa)) lie on the Extracellular side of the membrane. Asn137, Asn176, Asn230, Asn251, Asn331, Asn404, Asn409, and Asn436 each carry an N-linked (GlcNAc...) asparagine glycan. LRR repeat units lie at residues 415 to 438 (RIIS…QNLT), 439 to 461 (QLQK…LANM), and 463 to 485 (SLLF…LLDR). Residues Asn468 and Asn505 are each glycosylated (N-linked (GlcNAc...) asparagine). The helical transmembrane segment at 516–536 (IAPVAAAIAIFIAVLVLIIVF) threads the bilayer. The Cytoplasmic segment spans residues 537 to 866 (IKKRPSSIRA…LNQVIDSKSS (330 aa)). Phosphothreonine is present on Thr564. The 274-residue stretch at 573–846 (NNFERVIGEG…HVVQELKQCI (274 aa)) folds into the Protein kinase domain. Residues 579-587 (IGEGGFGVV) and Lys601 contribute to the ATP site. Phosphotyrosine is present on Tyr646. Asp698 acts as the Proton acceptor in catalysis. Position 732 is a phosphoserine (Ser732). Residues Thr733 and Thr738 each carry the phosphothreonine modification. Tyr746 carries the post-translational modification Phosphotyrosine.

This sequence belongs to the protein kinase superfamily. Ser/Thr protein kinase family.

Its subcellular location is the membrane. The enzyme catalyses L-seryl-[protein] + ATP = O-phospho-L-seryl-[protein] + ADP + H(+). It carries out the reaction L-threonyl-[protein] + ATP = O-phospho-L-threonyl-[protein] + ADP + H(+). In Arabidopsis thaliana (Mouse-ear cress), this protein is Probable LRR receptor-like serine/threonine-protein kinase At5g16900.